Reading from the N-terminus, the 1208-residue chain is Calmodulin-binding transcription activator 2 (1208 aa).

The segment at residues 30–160 is a DNA-binding region (CG-1); it reads RCPLLPPERL…YLNVPALEDC (131 aa). The short motif at 78 to 86 is the Nuclear localization signal element; it reads NRKKVKYRK. Disordered regions lie at residues 269 to 328, 366 to 418, and 437 to 507; these read ISHS…SRGG, VGSE…PCPA, and QLGA…ELEP. Over residues 275-288 the composition is skewed to pro residues; sequence PEPPPLIAPLPPEL. 2 stretches are compositionally biased toward low complexity: residues 294 to 305 and 319 to 328; these read SPSSSSSSSSSS and TSRGGSSRGG. Composition is skewed to pro residues over residues 371–380 and 464–476; these read SAPPAPPSPA and TVPPVPSSPPSSP. Residues 544 to 622 form the IPT/TIG domain; it reads DFSPEWSYPE…LSASVLFEYR (79 aa). ANK repeat units follow at residues 717–750, 762–792, and 796–826; these read RGMSLLHLAAAQGYARLIETLSQWRSVETGSLDL, FSCTPLMWACALGHLEAAVLLFCWNRQALSI, and LGRLPLSVAHSRGHVRLARCLEELQRQELSV. Disordered stretches follow at residues 826–881 and 908–936; these read VEHP…ASDI and NSKEPAPSPCGPPLAQDNGAAPEDADSPP. Residues 829–853 show a composition bias toward low complexity; sequence PLALSPPSSSPDTGLSSASSPSELS. IQ domains lie at 1054-1083 and 1107-1136; these read LYEAARVIQTAFRKYKGRRLKEQQEVAAAV and MTQAAILIQSKFRSYYEQKRFQQSRRAAVL. The interval 1144-1166 is disordered; that stretch reads YRRRPGPPHRPSGPLPARNKGTF.

This sequence belongs to the CAMTA family. May interact with calmodulin.

It localises to the nucleus. Functionally, transcription activator. May act as tumor suppressor. The sequence is that of Calmodulin-binding transcription activator 2 (Camta2) from Mus musculus (Mouse).